The chain runs to 234 residues: Glucosamine-6-phosphate deaminase (234 aa).

Asp-62 functions as the Proton acceptor; for enolization step in the catalytic mechanism. Residue Asn-128 is the For ring-opening step of the active site. Catalysis depends on His-130, which acts as the Proton acceptor; for ring-opening step. Glu-135 functions as the For ring-opening step in the catalytic mechanism.

It belongs to the glucosamine/galactosamine-6-phosphate isomerase family. NagB subfamily.

The catalysed reaction is alpha-D-glucosamine 6-phosphate + H2O = beta-D-fructose 6-phosphate + NH4(+). Its pathway is amino-sugar metabolism; N-acetylneuraminate degradation; D-fructose 6-phosphate from N-acetylneuraminate: step 5/5. Functionally, catalyzes the reversible isomerization-deamination of glucosamine 6-phosphate (GlcN6P) to form fructose 6-phosphate (Fru6P) and ammonium ion. The protein is Glucosamine-6-phosphate deaminase of Streptococcus pyogenes serotype M3 (strain ATCC BAA-595 / MGAS315).